Here is a 342-residue protein sequence, read N- to C-terminus: Cilia- and flagella-associated protein 36 (342 aa).

2 positions are modified to phosphoserine: Ser85 and Ser147. Residues Glu150–Glu187 adopt a coiled-coil conformation. Positions Glu166 to Glu194 are disordered. Basic and acidic residues predominate over residues Gln179–Thr189. Ser201 carries the post-translational modification Phosphoserine. Disordered regions lie at residues Arg229–Glu250 and Lys282–Lys322. 2 stretches are compositionally biased toward basic and acidic residues: residues Lys282–Thr292 and Gln300–Lys322.

This sequence belongs to the CFAP36 family. As to quaternary structure, interacts with ARL3. As to expression, expressed in several human tissues including brain, testis, heart, lung, pancreas and spleen (at protein level).

It localises to the nucleus. The protein localises to the cytoplasm. Its subcellular location is the cell projection. It is found in the cilium. The protein resides in the flagellum. Functionally, may act as an effector for ARL3. This chain is Cilia- and flagella-associated protein 36 (CFAP36), found in Homo sapiens (Human).